Consider the following 488-residue polypeptide: DELTA-alicitoxin-Pse2b (488 aa).

The first 21 residues, 1 to 21 (MSKPIIFLLTAFVVLTDLGAT), serve as a signal peptide directing secretion. The MACPF domain occupies 24–344 (TEKVEVKAKP…GYLNFDCAYE (321 aa)). The EGF-like domain occupies 369 to 398 (VCKLGPEGCHSDDDCESDDLIYCACCGDSC). Disulfide bonds link Cys370–Cys383, Cys377–Cys391, and Cys393–Cys398.

The protein resides in the secreted. The protein localises to the nematocyst. Functionally, causes lethal toxicity to the shrimp Palaemon paucidence, and hemolytic activity toward sheep red blood cells. This Phyllodiscus semoni (Night anemone) protein is DELTA-alicitoxin-Pse2b.